The chain runs to 248 residues: Myelin protein P0 (248 aa).

The N-terminal stretch at 1 to 29 is a signal peptide; it reads MAPGAPSSSPSPILAALLFSSLVLSPTLA. The region spanning 30–143 is the Ig-like V-type domain; it reads IVVYTDREVY…DIVGKTSQVT (114 aa). The Extracellular segment spans residues 30–153; that stretch reads IVVYTDREVY…LYVFEKVPTR (124 aa). Cysteine 50 and cysteine 127 are joined by a disulfide. An N-linked (GlcNAc...) (complex) asparagine glycan is attached at asparagine 122. Residues 154–179 traverse the membrane as a helical segment; it reads YGVVLGAVIGGILGVVLLLLLLFYLI. Over 180–248 the chain is Cytoplasmic; that stretch reads RYCWLRRQAA…GLGESRKDKK (69 aa). Residue serine 210 is modified to Phosphoserine; by PKC. The interval 222 to 248 is disordered; it reads MLDHSRSTKAASEKKSKGLGESRKDKK. Positions 224–248 are enriched in basic and acidic residues; sequence DHSRSTKAASEKKSKGLGESRKDKK. 2 positions are modified to phosphoserine: serine 226 and serine 228. Position 233 is a phosphoserine; by PKC (serine 233). Serine 237 carries the phosphoserine modification. Serine 243 bears the Phosphoserine; by PKC mark.

The protein belongs to the myelin P0 protein family. In terms of assembly, homodimer and homotetramer. In terms of processing, N-glycosylated; contains sulfate-substituted glycan. As to expression, found only in peripheral nervous system Schwann cells.

Its subcellular location is the cell membrane. Functionally, is an adhesion molecule necessary for normal myelination in the peripheral nervous system. It mediates adhesion between adjacent myelin wraps and ultimately drives myelin compaction. This is Myelin protein P0 (Mpz) from Rattus norvegicus (Rat).